The primary structure comprises 881 residues: Leucine--tRNA ligase (881 aa).

The 'HIGH' region motif lies at Pro-48 to His-58. The 'KMSKS' region signature appears at Lys-638–Ser-642. ATP is bound at residue Lys-641.

Belongs to the class-I aminoacyl-tRNA synthetase family.

The protein resides in the cytoplasm. It carries out the reaction tRNA(Leu) + L-leucine + ATP = L-leucyl-tRNA(Leu) + AMP + diphosphate. The protein is Leucine--tRNA ligase of Herminiimonas arsenicoxydans.